The sequence spans 104 residues: Pyrimidine/purine nucleoside phosphorylase (104 aa).

This sequence belongs to the nucleoside phosphorylase PpnP family.

It carries out the reaction a purine D-ribonucleoside + phosphate = a purine nucleobase + alpha-D-ribose 1-phosphate. The enzyme catalyses adenosine + phosphate = alpha-D-ribose 1-phosphate + adenine. It catalyses the reaction cytidine + phosphate = cytosine + alpha-D-ribose 1-phosphate. The catalysed reaction is guanosine + phosphate = alpha-D-ribose 1-phosphate + guanine. It carries out the reaction inosine + phosphate = alpha-D-ribose 1-phosphate + hypoxanthine. The enzyme catalyses thymidine + phosphate = 2-deoxy-alpha-D-ribose 1-phosphate + thymine. It catalyses the reaction uridine + phosphate = alpha-D-ribose 1-phosphate + uracil. The catalysed reaction is xanthosine + phosphate = alpha-D-ribose 1-phosphate + xanthine. Functionally, catalyzes the phosphorolysis of diverse nucleosides, yielding D-ribose 1-phosphate and the respective free bases. Can use uridine, adenosine, guanosine, cytidine, thymidine, inosine and xanthosine as substrates. Also catalyzes the reverse reactions. The sequence is that of Pyrimidine/purine nucleoside phosphorylase from Leptospira borgpetersenii serovar Hardjo-bovis (strain L550).